The primary structure comprises 739 residues: MEHTYQYAWVIPLLPLPVIMSMGFGLILIPTATKNLRRIWAFPSVLLLSIAMVFSVQLSIQQINGSSIYQYLWSWTVNNDFSLEFGYLIDPLTSIMLILITTVGILVLIYSDGYMSHDEGYLRFFVYISFFNTSMLGLVTSSNLIQIYFFWELVGMCSYLLIGFWFTRPIAASACQKAFVTNRVGDFGLLLGILGFFWITGSLEFRDLFQIANNWIPNNGINSLLTTLCAFLLFLGAVAKSAQFPLHVWLPDAMEGPTPISALIHAATMVAAGIFLLARLLPLFISLPLIMSFISLVGTITLFLGATLALAQRDIKRSLAYSTMSQLGYMMLALGIGSYQAALFHLITHAYSKALLFLGSGSVIHSMEPLVGYSPDKSQNMVLMGGLRKYIPITRTTFLWGTLSLCGIPPLACFWSKDEILSNSWLYSPFFGIIASFTAGLTAFYMFRIYLLTFGGYLRVHFQNYSSTKESSLYSISLWGKRIPKGVNRDFVLSTTKSGVSFFSQNIPKIQGNTRNRIGSFTTSFGAKNTFAYPHETGNTMLFPLLILLLFTLFIGFIGISFDNGGMDNGIAELTILSKWLTPSKNFTQESSNSFVNSYEFITNAISSVTLAIFGLFIAYIFYGSAYSFFQNLDLINSFVKRNPKKEFLDQVKKNIYSWSYNRGYIDIFYTRVFTLGIRGLTELTEFFDKGVIDGITNGVGLASFCIGEEIKYVGGGRISSYLFFFLCYVSVFLFFFLS.

16 consecutive transmembrane segments (helical) span residues 9–29 (WVIPLLPLPVIMSMGFGLILI), 39–59 (IWAFPSVLLLSIAMVFSVQLS), 89–109 (IDPLTSIMLILITTVGILVLI), 125–145 (FVYISFFNTSMLGLVTSSNLI), 147–167 (IYFFWELVGMCSYLLIGFWFT), 185–205 (GDFGLLLGILGFFWITGSLEF), 219–239 (NGINSLLTTLCAFLLFLGAVA), 258–278 (TPISALIHAATMVAAGIFLLA), 280–300 (LLPLFISLPLIMSFISLVGTI), 327–347 (LGYMMLALGIGSYQAALFHLI), 354–374 (ALLFLGSGSVIHSMEPLVGYS), 396–416 (TTFLWGTLSLCGIPPLACFWS), 425–445 (WLYSPFFGIIASFTAGLTAFY), 542–562 (LFPLLILLLFTLFIGFIGISF), 610–630 (TLAIFGLFIAYIFYGSAYSFF), and 719–739 (ISSYLFFFLCYVSVFLFFFLS).

The protein belongs to the complex I subunit 5 family. In terms of assembly, NDH is composed of at least 16 different subunits, 5 of which are encoded in the nucleus.

The protein localises to the plastid. The protein resides in the chloroplast thylakoid membrane. It catalyses the reaction a plastoquinone + NADH + (n+1) H(+)(in) = a plastoquinol + NAD(+) + n H(+)(out). The enzyme catalyses a plastoquinone + NADPH + (n+1) H(+)(in) = a plastoquinol + NADP(+) + n H(+)(out). In terms of biological role, NDH shuttles electrons from NAD(P)H:plastoquinone, via FMN and iron-sulfur (Fe-S) centers, to quinones in the photosynthetic chain and possibly in a chloroplast respiratory chain. The immediate electron acceptor for the enzyme in this species is believed to be plastoquinone. Couples the redox reaction to proton translocation, and thus conserves the redox energy in a proton gradient. The polypeptide is NAD(P)H-quinone oxidoreductase subunit 5, chloroplastic (ndhF) (Hordeum vulgare (Barley)).